A 341-amino-acid polypeptide reads, in one-letter code: Thymidine kinase (341 aa).

19-26 is an ATP binding site; sequence GAYGIGKT. Catalysis depends on Glu-48, which acts as the Proton acceptor. Tyr-66 and Gln-90 together coordinate substrate. Arg-183 contacts ATP. Arg-189 provides a ligand contact to substrate.

The protein belongs to the herpesviridae thymidine kinase family. In terms of assembly, homodimer.

It carries out the reaction thymidine + ATP = dTMP + ADP + H(+). In terms of biological role, catalyzes the transfer of the gamma-phospho group of ATP to thymidine to generate dTMP in the salvage pathway of pyrimidine synthesis. The dTMP serves as a substrate for DNA polymerase during viral DNA replication. Allows the virus to be reactivated and to grow in non-proliferative cells lacking a high concentration of phosphorylated nucleic acid precursors. This Varicella-zoster virus (strain Oka vaccine) (HHV-3) protein is Thymidine kinase.